The following is a 1016-amino-acid chain: Protein TIC110, chloroplastic (1016 aa).

The transit peptide at 1–51 directs the protein to the chloroplast; the sequence is MNPSLVTAINAPISPSPRSPLLSHFLPTLPHRFSKSECLSRRRYRVSFPRS. An N-acetylserine modification is found at serine 52. Residues 52–95 are Stromal-facing; it reads SAASSDQLSVSTQAKNPGIHGNKKELTGLQPIVEKMTPPVRLAT. The helical transmembrane segment at 96–116 threads the bilayer; it reads SAVVLAASLATGYGLGLRLAG. The Chloroplast intermembrane segment spans residues 117 to 118; the sequence is SR. A helical membrane pass occupies residues 119–139; it reads NIAFGGAAVAGAAGGAVVYAL. The Stromal segment spans residues 140-259; sequence NSAVPEVAAI…EREGDAEQRR (120 aa). The chain crosses the membrane as a helical span at residues 260-280; it reads AFMRLVYVSALVFGDASSFLL. Over 281–368 the chain is Chloroplast intermembrane; the sequence is PWKRVLKVTD…SILKSRTRAA (88 aa). The chain crosses the membrane as a helical span at residues 369–386; the sequence is KSLASVVEELEKVLEFNN. Residues 387–632 are Stromal-facing; sequence LLVSLKSHSE…RAAENRTDSA (246 aa). A helical transmembrane segment spans residues 633-650; the sequence is KELKKMIAFNTLVVTEMV. At 651-719 the chain is on the chloroplast intermembrane side; it reads ADIKGESSDK…DDLPDRDRID (69 aa). The span at 654–669 shows a compositional bias: basic and acidic residues; it reads KGESSDKAPEEDPVQE. The disordered stretch occupies residues 654-708; the sequence is KGESSDKAPEEDPVQEKEEDDEDEEWGSLESLRKTRPDKELAEKMGKPGQTEITL. Residues 670–680 show a composition bias toward acidic residues; sequence KEEDDEDEEWG. A compositionally biased stretch (basic and acidic residues) spans 684–699; sequence SLRKTRPDKELAEKMG. A helical transmembrane segment spans residues 720-736; sequence LYKTYLLYCVTGEVTRI. At 737–1016 the chain is on the stromal side; that stretch reads PFGAQITTKR…SAAEEGNFVF (280 aa).

Belongs to the chloroplast envelope anion channel-forming Tic110 (TC 1.A.18) family. Part of the Tic complex. Interacts with HSP70, HSP93 and TIC40. Interacts with the Toc complex components TOC33, TOC75 and TOC159. Interacts with LTD. Expressed in seedlings, flowers, leaves, stems and roots.

The protein resides in the plastid. The protein localises to the chloroplast inner membrane. Functionally, involved in protein precursor import into chloroplasts. Forms a voltage-dependent cation-selective channel at the inner envelope of chloroplasts, which specifically responds to a transit peptide. Associates with both the precursor and mature forms of the preprotein. The polypeptide is Protein TIC110, chloroplastic (TIC110) (Arabidopsis thaliana (Mouse-ear cress)).